A 1414-amino-acid chain; its full sequence is Protein KATNIP homolog (1414 aa).

7 disordered regions span residues 1-32, 80-116, 139-158, 712-731, 756-783, 823-861, and 924-943; these read MHGK…DEKH, QQST…PGKI, GPNT…NEDQ, VSAT…NDLT, SSSS…TFTN, KMDN…SEKY, and QQQK…SLMP. Composition is skewed to basic and acidic residues over residues 10 to 32 and 86 to 101; these read RKND…DEKH and LARE…DDGC. The segment covering 147 to 158 has biased composition (acidic residues); that stretch reads DFESDDDMNEDQ. 2 stretches are compositionally biased toward polar residues: residues 832–843 and 924–940; these read NFSNQSSYNSDR and QQQK…NGSS.

It is found in the cytoplasm. The protein localises to the cytoskeleton. It localises to the cilium axoneme. The protein resides in the cilium basal body. In terms of biological role, may control cilium integrity. This Xenopus laevis (African clawed frog) protein is Protein KATNIP homolog.